The sequence spans 535 residues: Phosphoenolpyruvate carboxykinase (ATP) (535 aa).

Substrate-binding residues include Arg59, Tyr201, and Lys207. ATP contacts are provided by residues Lys207, His226, and Gly243–Thr251. 2 residues coordinate Mn(2+): Lys207 and His226. Asp264 lines the Mn(2+) pocket. ATP-binding positions include Glu292, Arg328, Arg444–Ile445, and Thr450. Arg328 provides a ligand contact to substrate.

Belongs to the phosphoenolpyruvate carboxykinase (ATP) family. Requires Mn(2+) as cofactor.

The protein resides in the cytoplasm. The catalysed reaction is oxaloacetate + ATP = phosphoenolpyruvate + ADP + CO2. It functions in the pathway carbohydrate biosynthesis; gluconeogenesis. Functionally, involved in the gluconeogenesis. Catalyzes the conversion of oxaloacetate (OAA) to phosphoenolpyruvate (PEP) through direct phosphoryl transfer between the nucleoside triphosphate and OAA. This is Phosphoenolpyruvate carboxykinase (ATP) from Porphyromonas gingivalis (strain ATCC 33277 / DSM 20709 / CIP 103683 / JCM 12257 / NCTC 11834 / 2561).